A 708-amino-acid polypeptide reads, in one-letter code: Potassium-transporting ATPase ATP-binding subunit 2 (708 aa).

Residues 1-23 are disordered; sequence MRSPSRLPHETRDSRQRTPKTDM. Over residues 7–23 the composition is skewed to basic and acidic residues; it reads LPHETRDSRQRTPKTDM. 4 helical membrane-spanning segments follow: residues 49–69, 84–104, 235–255, and 283–303; these read MFIV…PNLF, GLIT…EAVA, IALT…VATM, and SIAI…GGLL. D339 (4-aspartylphosphate intermediate) is an active-site residue. Residues D376, E380, 407 to 414, and K426 each bind ATP; that span reads FSAKTRMS. 2 residues coordinate Mg(2+): D549 and D553. The next 3 membrane-spanning stretches (helical) occupy residues 619-639, 645-665, and 683-703; these read FAIL…IMGL, AIIS…PLAL, and IFIY…LIDV.

Belongs to the cation transport ATPase (P-type) (TC 3.A.3) family. Type IA subfamily. In terms of assembly, the system is composed of three essential subunits: KdpA, KdpB and KdpC.

The protein resides in the cell inner membrane. It carries out the reaction K(+)(out) + ATP + H2O = K(+)(in) + ADP + phosphate + H(+). Its function is as follows. Part of the high-affinity ATP-driven potassium transport (or Kdp) system, which catalyzes the hydrolysis of ATP coupled with the electrogenic transport of potassium into the cytoplasm. This subunit is responsible for energy coupling to the transport system and for the release of the potassium ions to the cytoplasm. This Nostoc sp. (strain PCC 7120 / SAG 25.82 / UTEX 2576) protein is Potassium-transporting ATPase ATP-binding subunit 2.